A 340-amino-acid polypeptide reads, in one-letter code: Ketol-acid reductoisomerase (NADP(+)) (340 aa).

In terms of domain architecture, KARI N-terminal Rossmann spans 1-182 (MRVYYDRDCD…GGGRSGIIET (182 aa)). NADP(+)-binding positions include 24-27 (YGSQ), R48, S51, S53, and 83-86 (DELQ). H108 is an active-site residue. Residue G134 coordinates NADP(+). In terms of domain architecture, KARI C-terminal knotted spans 183–329 (NFRQECETDL…EKLRGMMPWI (147 aa)). Mg(2+)-binding residues include D191, E195, E227, and E231. Residue S252 coordinates substrate.

The protein belongs to the ketol-acid reductoisomerase family. Mg(2+) is required as a cofactor.

The catalysed reaction is (2R)-2,3-dihydroxy-3-methylbutanoate + NADP(+) = (2S)-2-acetolactate + NADPH + H(+). It carries out the reaction (2R,3R)-2,3-dihydroxy-3-methylpentanoate + NADP(+) = (S)-2-ethyl-2-hydroxy-3-oxobutanoate + NADPH + H(+). The protein operates within amino-acid biosynthesis; L-isoleucine biosynthesis; L-isoleucine from 2-oxobutanoate: step 2/4. It participates in amino-acid biosynthesis; L-valine biosynthesis; L-valine from pyruvate: step 2/4. Functionally, involved in the biosynthesis of branched-chain amino acids (BCAA). Catalyzes an alkyl-migration followed by a ketol-acid reduction of (S)-2-acetolactate (S2AL) to yield (R)-2,3-dihydroxy-isovalerate. In the isomerase reaction, S2AL is rearranged via a Mg-dependent methyl migration to produce 3-hydroxy-3-methyl-2-ketobutyrate (HMKB). In the reductase reaction, this 2-ketoacid undergoes a metal-dependent reduction by NADPH to yield (R)-2,3-dihydroxy-isovalerate. The chain is Ketol-acid reductoisomerase (NADP(+)) from Cereibacter sphaeroides (strain ATCC 17023 / DSM 158 / JCM 6121 / CCUG 31486 / LMG 2827 / NBRC 12203 / NCIMB 8253 / ATH 2.4.1.) (Rhodobacter sphaeroides).